The primary structure comprises 35 residues: GLFLNTVKDVAKDVAKDVAGKLLESLKCKITGCKP.

An intrachain disulfide couples C28 to C33.

In terms of tissue distribution, expressed by the skin glands.

It localises to the secreted. Functionally, antibacterial activity against Gram-positive bacterium S.aureus. Shows no detectable hemolytic activity towards human erythrocytes. The chain is Ranatuerin-2SPb from Lithobates septentrionalis (Mink frog).